Here is a 342-residue protein sequence, read N- to C-terminus: Ribosomal RNA small subunit methyltransferase C (342 aa).

Belongs to the methyltransferase superfamily. RsmC family. In terms of assembly, monomer.

The protein localises to the cytoplasm. It catalyses the reaction guanosine(1207) in 16S rRNA + S-adenosyl-L-methionine = N(2)-methylguanosine(1207) in 16S rRNA + S-adenosyl-L-homocysteine + H(+). Specifically methylates the guanine in position 1207 of 16S rRNA in the 30S particle. This chain is Ribosomal RNA small subunit methyltransferase C, found in Salmonella arizonae (strain ATCC BAA-731 / CDC346-86 / RSK2980).